Consider the following 175-residue polypeptide: Large ribosomal subunit protein uL30 (175 aa).

The protein belongs to the universal ribosomal protein uL30 family. In terms of assembly, part of the 50S ribosomal subunit.

In Pyrobaculum neutrophilum (strain DSM 2338 / JCM 9278 / NBRC 100436 / V24Sta) (Thermoproteus neutrophilus), this protein is Large ribosomal subunit protein uL30.